The chain runs to 374 residues: 5-aminosalicylate 1,2-dioxygenase (374 aa).

The protein belongs to the gentisate 1,2-dioxygenase family. Fe(2+) serves as cofactor.

It catalyses the reaction 5-amino-2-hydroxybenzoate + O2 = (2Z,4E)-4-amino-6-oxohepta-2,4-dienedioate + H(+). With respect to regulation, inhibited by SDS and o-phenanthroline, a ferrous iron chelator. Partially inhibited by EDTA. Functionally, involved in the biodegradation of 3-aminobenzoate. Catalyzes the cleavage of the 5-aminosalicylate (5ASA) aromatic ring to form 4-amino-6-oxohepta-2,4-dienedioate (cis-ACOHDA). Can also convert gentisate, but the catalytic efficiency with 5ASA is 70-fold higher. This is 5-aminosalicylate 1,2-dioxygenase from Comamonas sp.